The chain runs to 162 residues: Protein FAM162B (162 aa).

The segment at 26-69 is disordered; sequence EATRRPAPALPPRGLPCYSSGGAPSNSGPQGHGEIHRVPTQRRP. A helical membrane pass occupies residues 107–127; sequence VKACYIMIGLTIIACFAVIVS.

It belongs to the UPF0389 family.

It localises to the membrane. This Homo sapiens (Human) protein is Protein FAM162B (FAM162B).